The sequence spans 845 residues: uncharacterized protein (845 aa).

Disordered regions lie at residues 17–37 (RRKQDALHSPSLNMDKKNDQP) and 550–573 (AATEAEVEDQNSERNDDNALNESL). Residues 622 to 707 (LSEQRFEREN…ELKKSNEHTR (86 aa)) are a coiled coil.

This is an uncharacterized protein from Saccharum officinarum (Sugarcane).